The primary structure comprises 1433 residues: Bacillopeptidase F (1433 aa).

The first 30 residues, 1–30 (MRKKTKNRLISSVLSTVVISSLLFPGAAGA), serve as a signal peptide directing secretion. Residues 31–194 (SSKVTSPSVK…NMKKAQKAIK (164 aa)) constitute a propeptide that is removed on maturation. Residues 68–177 (TFLIKFKDLA…KVLPNEKRQL (110 aa)) enclose the Inhibitor I9 domain. Residues 200-512 (EWNVDQIDAP…HGLVNAFDAV (313 aa)) form the Peptidase S8 domain. Catalysis depends on charge relay system residues Asp227, His274, and Ser452. A propeptide spanning residues 756–1433 (SAYKGQNIQV…NGKLNMNTEN (678 aa)) is cleaved from the precursor. The segment at 800–830 (KLGVEKPSGKQKKKPVNPKKAKPSANTAVKH) is disordered. The span at 808–821 (GKQKKKPVNPKKAK) shows a compositional bias: basic residues.

The protein belongs to the peptidase S8 family.

It localises to the secreted. The sequence is that of Bacillopeptidase F (bpr) from Bacillus subtilis (strain 168).